Here is a 478-residue protein sequence, read N- to C-terminus: MSKRKQVTIPIEKIQEQDKYIEQIHRQNEEYFNRTGKRKLVFTQTFGCQMNEHDSEKLCSMLEEMGYQMSMMVEESDLIIYNTCAVRENAELKVYGNLGQLKHLKGKNPDMKIAVCGCMMQQPHVVEELRKKYKHVDLIFGTHNLYKFPQLLTESINSDKMLVDVWDVDGEVIEGLRSNRKFELKAFVNIMYGCNNFCTYCIVPYTRGRERSRTPEDIINEIKELVANGTKEITLLGQNVDSYGKTLENPVSFSELLRKVNDIEGIERVRFMTSHPKDISDEVIYAIRDCDKVCEFLHLPIQCGSSSLLKKMNRHYTKEYYLEIIEKAKKEVPGIAFSTDLMIGFPGETEEDLLDTLDVVEKVRYDSAFTFIYSKRQGTPAAKMENQIPEDIKHDRFNRVLEAVNRISAEINDGYKDRIVEVLVEGRSKNNENKFAGRTRQNKLVNFEGGNDDLIGKLVMVKITEPRTFSLNGILVNN.

The 119-residue stretch at 39–157 folds into the MTTase N-terminal domain; that stretch reads KLVFTQTFGC…FPQLLTESIN (119 aa). 6 residues coordinate [4Fe-4S] cluster: cysteine 48, cysteine 84, cysteine 118, cysteine 194, cysteine 198, and cysteine 201. Residues 180 to 410 enclose the Radical SAM core domain; that stretch reads RKFELKAFVN…LEAVNRISAE (231 aa). Residues 410–477 enclose the TRAM domain; it reads EINDGYKDRI…TFSLNGILVN (68 aa).

The protein belongs to the methylthiotransferase family. MiaB subfamily. In terms of assembly, monomer. Requires [4Fe-4S] cluster as cofactor.

The protein resides in the cytoplasm. The catalysed reaction is N(6)-dimethylallyladenosine(37) in tRNA + (sulfur carrier)-SH + AH2 + 2 S-adenosyl-L-methionine = 2-methylsulfanyl-N(6)-dimethylallyladenosine(37) in tRNA + (sulfur carrier)-H + 5'-deoxyadenosine + L-methionine + A + S-adenosyl-L-homocysteine + 2 H(+). Catalyzes the methylthiolation of N6-(dimethylallyl)adenosine (i(6)A), leading to the formation of 2-methylthio-N6-(dimethylallyl)adenosine (ms(2)i(6)A) at position 37 in tRNAs that read codons beginning with uridine. The polypeptide is tRNA-2-methylthio-N(6)-dimethylallyladenosine synthase (Clostridioides difficile (strain 630) (Peptoclostridium difficile)).